A 459-amino-acid chain; its full sequence is tRNA modification GTPase MnmE (459 aa).

The (6S)-5-formyl-5,6,7,8-tetrahydrofolate site is built by arginine 20, glutamate 85, and arginine 124. Residues 221-380 (GLSTVIIGRP…LEMAIQSLFF (160 aa)) enclose the TrmE-type G domain. Asparagine 231 serves as a coordination point for K(+). GTP is bound by residues 231-236 (NVGKSS), 250-256 (TDIPGTT), and 275-278 (DTAG). Mg(2+) is bound at residue serine 235. Residues threonine 250, isoleucine 252, and threonine 255 each coordinate K(+). Threonine 256 serves as a coordination point for Mg(2+). Position 459 (lysine 459) interacts with (6S)-5-formyl-5,6,7,8-tetrahydrofolate.

Belongs to the TRAFAC class TrmE-Era-EngA-EngB-Septin-like GTPase superfamily. TrmE GTPase family. Homodimer. Heterotetramer of two MnmE and two MnmG subunits. K(+) is required as a cofactor.

It is found in the cytoplasm. In terms of biological role, exhibits a very high intrinsic GTPase hydrolysis rate. Involved in the addition of a carboxymethylaminomethyl (cmnm) group at the wobble position (U34) of certain tRNAs, forming tRNA-cmnm(5)s(2)U34. In Bacillus pumilus (strain SAFR-032), this protein is tRNA modification GTPase MnmE.